The sequence spans 132 residues: Small ribosomal subunit protein eS12 (132 aa).

This sequence belongs to the eukaryotic ribosomal protein eS12 family.

The sequence is that of Small ribosomal subunit protein eS12 (rps12) from Oreochromis niloticus (Nile tilapia).